A 231-amino-acid polypeptide reads, in one-letter code: Ureidoacrylate amidohydrolase RutB (231 aa).

The active-site Proton acceptor is the Asp25. Lys134 is a catalytic residue. Cys167 acts as the Nucleophile in catalysis.

This sequence belongs to the isochorismatase family. RutB subfamily.

It catalyses the reaction (Z)-3-ureidoacrylate + H2O + H(+) = (Z)-3-aminoacrylate + NH4(+) + CO2. The catalysed reaction is (Z)-3-ureidoacrylate + H2O = (Z)-3-aminoacrylate + carbamate + H(+). It carries out the reaction (Z)-2-methylureidoacrylate + H2O + H(+) = (Z)-2-methylaminoacrylate + NH4(+) + CO2. Its function is as follows. Hydrolyzes ureidoacrylate to form aminoacrylate and carbamate. The carbamate hydrolyzes spontaneously, thereby releasing one of the nitrogen atoms of the pyrimidine ring as ammonia and one of its carbon atoms as CO2. This chain is Ureidoacrylate amidohydrolase RutB, found in Escherichia coli (strain SMS-3-5 / SECEC).